Here is a 644-residue protein sequence, read N- to C-terminus: DNA gyrase subunit B (644 aa).

A Toprim domain is found at C429 to P543. The Mg(2+) site is built by E435, D508, and D510.

Belongs to the type II topoisomerase GyrB family. Heterotetramer, composed of two GyrA and two GyrB chains. In the heterotetramer, GyrA contains the active site tyrosine that forms a transient covalent intermediate with DNA, while GyrB binds cofactors and catalyzes ATP hydrolysis. It depends on Mg(2+) as a cofactor. The cofactor is Mn(2+). Ca(2+) is required as a cofactor.

The protein resides in the cytoplasm. It catalyses the reaction ATP-dependent breakage, passage and rejoining of double-stranded DNA.. A type II topoisomerase that negatively supercoils closed circular double-stranded (ds) DNA in an ATP-dependent manner to modulate DNA topology and maintain chromosomes in an underwound state. Negative supercoiling favors strand separation, and DNA replication, transcription, recombination and repair, all of which involve strand separation. Also able to catalyze the interconversion of other topological isomers of dsDNA rings, including catenanes and knotted rings. Type II topoisomerases break and join 2 DNA strands simultaneously in an ATP-dependent manner. The chain is DNA gyrase subunit B from Staphylococcus aureus (strain MRSA252).